We begin with the raw amino-acid sequence, 200 residues long: NAD(P)H dehydrogenase (quinone) (200 aa).

The region spanning 4–191 is the Flavodoxin-like domain; it reads LLVLYYSMYG…TIARFQGEHV (188 aa). Residues 10–15 and 79–81 contribute to the FMN site; these read SMYGHV and TRF. Tyr-12 serves as a coordination point for NAD(+). Trp-99 contacts substrate. FMN contacts are provided by residues 114-120 and His-135; that span reads STASQHG.

Belongs to the WrbA family. Requires FMN as cofactor.

It carries out the reaction a quinone + NADH + H(+) = a quinol + NAD(+). It catalyses the reaction a quinone + NADPH + H(+) = a quinol + NADP(+). The chain is NAD(P)H dehydrogenase (quinone) from Nitrosococcus oceani (strain ATCC 19707 / BCRC 17464 / JCM 30415 / NCIMB 11848 / C-107).